A 304-amino-acid polypeptide reads, in one-letter code: Glutaminase (304 aa).

Substrate is bound by residues S63, N114, E158, N165, Y189, Y240, and V258.

It belongs to the glutaminase family. In terms of assembly, homotetramer.

The catalysed reaction is L-glutamine + H2O = L-glutamate + NH4(+). This chain is Glutaminase, found in Shewanella loihica (strain ATCC BAA-1088 / PV-4).